Reading from the N-terminus, the 52-residue chain is Gastrin/cholecystokinin-like peptide (52 aa).

The protein belongs to the gastrin/cholecystokinin family.

The protein resides in the secreted. May control digestion processes. The protein is Gastrin/cholecystokinin-like peptide of Trachemys scripta (Red-eared slider turtle).